We begin with the raw amino-acid sequence, 103 residues long: Flagellar hook-basal body complex protein FliE (103 aa).

This sequence belongs to the FliE family.

It localises to the bacterial flagellum basal body. The chain is Flagellar hook-basal body complex protein FliE from Yersinia pestis.